The primary structure comprises 280 residues: Glycoprotein G (280 aa).

Positions 1–24 (MGHSGENVLCVALLAIYLAAGGAA) are cleaved as a signal peptide. Asn-85 and Asn-111 each carry an N-linked (GlcNAc...) asparagine; by host glycan. The disordered stretch occupies residues 191–218 (ESSEERVVATDSDSGSCEDDEKEEKSDC).

The protein belongs to the alphaherpesvirinae glycoprotein G family.

This chain is Glycoprotein G (gG), found in Psittacid herpesvirus 1 (isolate Amazon parrot/-/97-0001/1997) (PsHV-1).